Here is a 248-residue protein sequence, read N- to C-terminus: MKPLRLLSTDLDGTVVGDNDATRRFRDFWHALPDDLRPVLVFNSGRLIDDQLALLEEVPLPQPDYIIGGVGTMLHAKKRSELETAYTQSLGTGFDPRKIADVMNRIAGVTMQEERYQHGLKSSWFLHDADAAALGEIEAALLAADIDARIVYSSDRDLDILPKAADKGAALAWLCGQLRIGLDESVVSGDTGNDRAMFELKTIRGVIVGNALPELVSLAHQDNRFFHSTAKEADGVIEGLRHWGLNPR.

The protein belongs to the sucrose phosphatase family.

It catalyses the reaction beta-D-fructofuranosyl alpha-D-mannopyranoside 6(F)-phosphate + H2O = beta-D-fructofuranosyl alpha-D-mannopyranoside + phosphate. It participates in carbohydrate metabolism; mannosylfructose biosynthesis; beta-D-fructofuranosyl alpha-D-mannopyranoside from D-fructose 6-phosphate and GDP-alpha-D-mannose: step 2/2. With respect to regulation, inhibited by the phosphatase inhibitors fluoride, molybdate and orthovanadate. The sequence is that of Mannosylfructose-phosphate phosphatase from Agrobacterium fabrum (strain C58 / ATCC 33970) (Agrobacterium tumefaciens (strain C58)).